The chain runs to 824 residues: Leucine--tRNA ligase (824 aa).

The 'HIGH' region motif lies at 42–52 (PYPSGKIHMGH). Residues 581-585 (KMSKS) carry the 'KMSKS' region motif. Lys-584 provides a ligand contact to ATP.

The protein belongs to the class-I aminoacyl-tRNA synthetase family.

Its subcellular location is the cytoplasm. The enzyme catalyses tRNA(Leu) + L-leucine + ATP = L-leucyl-tRNA(Leu) + AMP + diphosphate. This chain is Leucine--tRNA ligase, found in Citrifermentans bemidjiense (strain ATCC BAA-1014 / DSM 16622 / JCM 12645 / Bem) (Geobacter bemidjiensis).